The chain runs to 506 residues: Kynureninase 1 (506 aa).

Pyridoxal 5'-phosphate-binding positions include leucine 141, threonine 142, 169–172 (FPSD), aspartate 254, histidine 257, and tyrosine 279. Lysine 280 carries the post-translational modification N6-(pyridoxal phosphate)lysine. Low complexity predominate over residues 303–319 (ETAPTTTPDGTNGNPKT). A disordered region spans residues 303–322 (ETAPTTTPDGTNGNPKTISD). Residues tryptophan 334 and asparagine 362 each contribute to the pyridoxal 5'-phosphate site.

Belongs to the kynureninase family. Homodimer. Pyridoxal 5'-phosphate is required as a cofactor.

The protein localises to the cytoplasm. It catalyses the reaction L-kynurenine + H2O = anthranilate + L-alanine + H(+). The enzyme catalyses 3-hydroxy-L-kynurenine + H2O = 3-hydroxyanthranilate + L-alanine + H(+). The protein operates within amino-acid degradation; L-kynurenine degradation; L-alanine and anthranilate from L-kynurenine: step 1/1. It participates in cofactor biosynthesis; NAD(+) biosynthesis; quinolinate from L-kynurenine: step 2/3. Functionally, catalyzes the cleavage of L-kynurenine (L-Kyn) and L-3-hydroxykynurenine (L-3OHKyn) into anthranilic acid (AA) and 3-hydroxyanthranilic acid (3-OHAA), respectively. In Phaeosphaeria nodorum (strain SN15 / ATCC MYA-4574 / FGSC 10173) (Glume blotch fungus), this protein is Kynureninase 1.